We begin with the raw amino-acid sequence, 142 residues long: Large ribosomal subunit protein uL11 (142 aa).

The residue at position 2 (alanine 2) is a N,N,N-trimethylalanine. N6,N6,N6-trimethyllysine occurs at positions 4 and 40.

The protein belongs to the universal ribosomal protein uL11 family. Part of the ribosomal stalk of the 50S ribosomal subunit. Interacts with L10 and the large rRNA to form the base of the stalk. L10 forms an elongated spine to which L12 dimers bind in a sequential fashion forming a multimeric L10(L12)X complex. Post-translationally, one or more lysine residues are methylated.

Forms part of the ribosomal stalk which helps the ribosome interact with GTP-bound translation factors. This chain is Large ribosomal subunit protein uL11, found in Shigella flexneri.